The sequence spans 508 residues: MDEKTKKAEEMALSLARAVAGGDEQAAIKYATWLAEQRVPLRVQVKPEVSPTQDIRLCVSVEDAYMHTVTIWLTVRPDMTVASLKDMVFLDYGFPPSLQQWVVGQRLARDQETLHSHGIRRNGDGAYLYLLSARNTSLNPQELQRQRQLRMLEDLGFKDLTLQSRGPLEPVLPKPRTNQEPGQPDAAPESPPVGWQCPGCTFINKPTRPGCEMCCRARPETYQIPASYQPDEEERARLAGEEEALRQYQQRKQQQQEGNYLQHVQLEQRSLVLNTEPTECPVCYSVLAPGEAVVLRECLHTFCRECLQGTIRNSQEAEVACPFIDSTYSCPGKLLEREIRALLSPEDYQRFLDLGVSIAENRSTLSYHCKTPDCRGWCFFEDDVNEFTCPVCTRVNCLLCKAIHEHMNCREYQDDLALRAQNDVAARQTTEMLKVMLQQGEAMHCPQCRIVVQKKDGCDWIRCTVCHTEICWVTKGPRWGPGGPGDTSGGCRCRVNGIPCHPSCQNCH.

Met-1 is modified (N-acetylmethionine). Residues 1–218 (MDEKTKKAEE…PGCEMCCRAR (218 aa)) form an interaction with IRF3 region. The interaction with TAB2 stretch occupies residues 1–268 (MDEKTKKAEE…NYLQHVQLEQ (268 aa)). Ser-50 bears the Phosphoserine mark. The Ubiquitin-like domain maps to 55–119 (IRLCVSVEDA…DQETLHSHGI (65 aa)). The segment at 69-131 (VTIWLTVRPD…NGDGAYLYLL (63 aa)) is interaction with RNF31. The tract at residues 163–191 (QSRGPLEPVLPKPRTNQEPGQPDAAPESP) is disordered. The segment at 188 to 220 (PESPPVGWQCPGCTFINKPTRPGCEMCCRARPE) adopts a RanBP2-type zinc-finger fold. Residues 231–259 (DEEERARLAGEEEALRQYQQRKQQQQEGN) are a coiled coil. Residues 276 to 504 (EPTECPVCYS…VNGIPCHPSC (229 aa)) form a TRIAD supradomain region. 7 residues coordinate Zn(2+): Cys-280, Cys-283, Cys-298, His-300, Cys-303, Cys-306, and Cys-321. The RING-type 1 zinc-finger motif lies at 280–330 (CPVCYSVLAPGEAVVLRECLHTFCRECLQGTIRNSQEAEVACPFIDSTYSC). Tyr-328 carries the phosphotyrosine modification. Residues Cys-330, Cys-369, Cys-374, Cys-389, Cys-392, Cys-397, Cys-400, His-404, Cys-409, Cys-445, and Cys-448 each contribute to the Zn(2+) site. The segment at 349-409 (QRFLDLGVSI…CKAIHEHMNC (61 aa)) adopts an IBR-type zinc-finger fold. Residues 445–474 (CPQCRIVVQKKDGCDWIRCTVCHTEICWVT) form an RING-type 2; atypical zinc finger. Residue Cys-458 is part of the active site. Cys-463 and Cys-466 together coordinate Zn(2+).

The protein belongs to the RBR family. Component of the LUBAC complex (linear ubiquitin chain assembly complex) which consists of SHARPIN, RBCK1 and RNF31. LUBAC has a MW of approximately 600 kDa suggesting a heteromultimeric assembly of its subunits. Interacts with beta-I-type (PRKCB1) and zeta-type protein kinase C (PRKCZ). Interacts with UBE2L3. Interacts with IREB2 only in iron-rich conditions. Associates with the TNF-R1 signaling complex (TNF-RSC) in a stimulation-dependent manner. Interacts with EYA1, TAB2, TAB3, MAP3K7 TRAF6 and RIPK1. Interacts with IRF3. Auto-ubiquitinated. Auto-ubiquitination leads to degradation by the proteasome. In terms of processing, phosphorylated. In vitro, phosphorylation inhibits auto-ubiquitination activity.

The catalysed reaction is [E2 ubiquitin-conjugating enzyme]-S-ubiquitinyl-L-cysteine + [acceptor protein]-L-lysine = [E2 ubiquitin-conjugating enzyme]-L-cysteine + [acceptor protein]-N(6)-ubiquitinyl-L-lysine.. It functions in the pathway protein modification; protein ubiquitination. Functionally, E3 ubiquitin-protein ligase, which accepts ubiquitin from specific E2 ubiquitin-conjugating enzymes, such as UBE2L3/UBCM4, and then transfers it to substrates. Functions as an E3 ligase for oxidized IREB2 and both heme and oxygen are necessary for IREB2 ubiquitination. Promotes ubiquitination of TAB2 and IRF3 and their degradation by the proteasome. Component of the LUBAC complex which conjugates linear ('Met-1'-linked) polyubiquitin chains to substrates and plays a key role in NF-kappa-B activation and regulation of inflammation. LUBAC conjugates linear polyubiquitin to IKBKG and RIPK1 and is involved in activation of the canonical NF-kappa-B and the JNK signaling pathways. Linear ubiquitination mediated by the LUBAC complex interferes with TNF-induced cell death and thereby prevents inflammation. LUBAC is recruited to the TNF-R1 signaling complex (TNF-RSC) following polyubiquitination of TNF-RSC components by BIRC2 and/or BIRC3 and to conjugate linear polyubiquitin to IKBKG and possibly other components contributing to the stability of the complex. The LUBAC complex is also involved in innate immunity by conjugating linear polyubiquitin chains at the surface of bacteria invading the cytosol to form the ubiquitin coat surrounding bacteria. LUBAC is not able to initiate formation of the bacterial ubiquitin coat, and can only promote formation of linear polyubiquitins on pre-existing ubiquitin. The bacterial ubiquitin coat acts as an 'eat-me' signal for xenophagy and promotes NF-kappa-B activation. Together with OTULIN, the LUBAC complex regulates the canonical Wnt signaling during angiogenesis. Binds polyubiquitin of different linkage types. This chain is RanBP-type and C3HC4-type zinc finger-containing protein 1 (Rbck1), found in Mus musculus (Mouse).